The sequence spans 126 residues: Holo-[acyl-carrier-protein] synthase (126 aa).

Mg(2+) contacts are provided by Asp9 and Glu58.

It belongs to the P-Pant transferase superfamily. AcpS family. Requires Mg(2+) as cofactor.

It is found in the cytoplasm. It carries out the reaction apo-[ACP] + CoA = holo-[ACP] + adenosine 3',5'-bisphosphate + H(+). Transfers the 4'-phosphopantetheine moiety from coenzyme A to a Ser of acyl-carrier-protein. This Salmonella agona (strain SL483) protein is Holo-[acyl-carrier-protein] synthase.